The primary structure comprises 509 residues: Cytochrome P450 monooxygenase ORF9 (509 aa).

2 helical membrane passes run 20–40 (IYVL…GLIV) and 309–329 (LIIA…YYLL). Asparagine 353 carries an N-linked (GlcNAc...) asparagine glycan. Cysteine 448 contacts heme.

The protein belongs to the cytochrome P450 family. Heme is required as a cofactor.

The protein localises to the membrane. The protein operates within sesquiterpene biosynthesis. Its function is as follows. Cytochrome P450 monooxygenase; part of the gene cluster that mediates the biosynthesis of PR-toxin, a bicyclic sesquiterpene belonging to the eremophilane class and acting as a mycotoxin. The first step of the pathway is catalyzed by the aristolochene synthase which performs the cyclization of trans,trans-farnesyl diphosphate (FPP) to the bicyclic sesquiterpene aristolochene. Following the formation of aristolochene, the non-oxygenated aristolochene is converted to the trioxygenated intermediate eremofortin B, via 7-epi-neopetasone. This conversion appears to involve three enzymes, a hydroxysterol oxidase-like enzyme, the quinone-oxidase prx3 that forms the quinone-type-structure in the bicyclic nucleus of aristolochene with the C8-oxo group and the C-3 hydroxyl group, and the P450 monooxygenase ORF6 that introduces the epoxide at the double bond between carbons 1 and 2. No monoxy or dioxy-intermediates have been reported to be released to the broth, so these three early oxidative reactions may be coupled together. Eremofortin B is further oxidized by another P450 monooxygenase, that introduces a second epoxide between carbons 7 and 11 prior to acetylation to eremofortin A by the acetyltransferase ORF8. The second epoxidation may be performed by a second P450 monooxygenase. After the acetylation step, eremofortin A is converted to eremofortin C and then to PR-toxin. First the conversion of eremofortin A to eremofortin C proceeds by oxidation of the side chain of the molecule at C-12 and is catalyzed by the short-chain oxidoreductase prx1. The cytochrome P450 monooxygenase ORF6 is probably also involved in this step. The primary alcohol formed at C-12 is finally oxidized by the short-chain alcohol dehydrogenase prx4 that forms PR-toxin. This chain is Cytochrome P450 monooxygenase ORF9, found in Penicillium roqueforti (strain FM164).